Reading from the N-terminus, the 1482-residue chain is Chromosome partition protein MukB (1482 aa).

34–41 is a binding site for ATP; it reads GGNGAGKS. Coiled coils occupy residues 337 to 468, 509 to 604, 780 to 805, 835 to 1044, 1070 to 1115, and 1210 to 1265; these read LNLV…LSVA, QHLA…APIW, RAAR…ATLS, EAEI…ELVD, TNRA…TAKA, and EAIE…LQAV. Residues 666-783 form a flexible hinge region; it reads PGGAEDQRLV…AVPLFGRAAR (118 aa).

Belongs to the SMC family. MukB subfamily. As to quaternary structure, homodimerization via its hinge domain. Binds to DNA via its C-terminal region. Interacts, and probably forms a ternary complex, with MukE and MukF via its C-terminal region. The complex formation is stimulated by calcium or magnesium. Interacts with tubulin-related protein FtsZ.

Its subcellular location is the cytoplasm. The protein resides in the nucleoid. Its function is as follows. Plays a central role in chromosome condensation, segregation and cell cycle progression. Functions as a homodimer, which is essential for chromosome partition. Involved in negative DNA supercoiling in vivo, and by this means organize and compact chromosomes. May achieve or facilitate chromosome segregation by condensation DNA from both sides of a centrally located replisome during cell division. The protein is Chromosome partition protein MukB of Serratia proteamaculans (strain 568).